The chain runs to 29 residues: uncharacterized protein (29 aa).

It localises to the plastid. It is found in the chloroplast. This is an uncharacterized protein from Trieres chinensis (Marine centric diatom).